The sequence spans 352 residues: Photosystem II D2 protein (352 aa).

T2 is modified (N-acetylthreonine). T2 bears the Phosphothreonine mark. The chain crosses the membrane as a helical span at residues 40–60 (CAYFALGGWLTGTTFVSSWYT). H117 is a chlorophyll a binding site. Residues 124 to 140 (GFMLRQFEIARAVQIRP) form a helical membrane-spanning segment. Q129 and N142 together coordinate pheophytin a. A helical transmembrane segment spans residues 152–165 (VFVSVFLIYPLGQS). Chlorophyll a is bound at residue H197. A helical transmembrane segment spans residues 207–227 (AALLCAIHGATVENTLFEDGD). 2 residues coordinate a plastoquinone: H214 and F261. H214 provides a ligand contact to Fe cation. Residue H268 participates in Fe cation binding. A helical transmembrane segment spans residues 278–294 (GLWMSALGVVGLALNLR).

The protein belongs to the reaction center PufL/M/PsbA/D family. In terms of assembly, PSII is composed of 1 copy each of membrane proteins PsbA, PsbB, PsbC, PsbD, PsbE, PsbF, PsbH, PsbI, PsbJ, PsbK, PsbL, PsbM, PsbT, PsbX, PsbY, PsbZ, Psb30/Ycf12, at least 3 peripheral proteins of the oxygen-evolving complex and a large number of cofactors. It forms dimeric complexes. The D1/D2 heterodimer binds P680, chlorophylls that are the primary electron donor of PSII, and subsequent electron acceptors. It shares a non-heme iron and each subunit binds pheophytin, quinone, additional chlorophylls, carotenoids and lipids. There is also a Cl(-1) ion associated with D1 and D2, which is required for oxygen evolution. The PSII complex binds additional chlorophylls, carotenoids and specific lipids. is required as a cofactor.

The protein resides in the plastid. The protein localises to the chloroplast thylakoid membrane. The enzyme catalyses 2 a plastoquinone + 4 hnu + 2 H2O = 2 a plastoquinol + O2. Functionally, photosystem II (PSII) is a light-driven water:plastoquinone oxidoreductase that uses light energy to abstract electrons from H(2)O, generating O(2) and a proton gradient subsequently used for ATP formation. It consists of a core antenna complex that captures photons, and an electron transfer chain that converts photonic excitation into a charge separation. The D1/D2 (PsbA/PsbD) reaction center heterodimer binds P680, the primary electron donor of PSII as well as several subsequent electron acceptors. D2 is needed for assembly of a stable PSII complex. The sequence is that of Photosystem II D2 protein from Ostreococcus tauri.